We begin with the raw amino-acid sequence, 713 residues long: Acetyl-coenzyme A synthetase 1 (713 aa).

Residues 1–39 (MSPSAVQSSKLEEQSSEIDKLKAKMSQSAATAQQKKEHE) form a disordered region. Positions 10 to 22 (KLEEQSSEIDKLK) are enriched in basic and acidic residues. CoA-binding positions include 248-251 (RGGK) and Thr-367. Residues 443 to 445 (GEP), 467 to 472 (DTYWQT), Asp-559, and Arg-574 each bind ATP. The FACS motif lies at 552–600 (PGYYFTGDGAAKDKDGYIWILGRVDDVVNVSGHRLSTAEIEAAIIEDPI). Ser-582 lines the CoA pocket. ATP is bound at residue Arg-585. Residue Arg-650 coordinates CoA. The short motif at 711–713 (VKL) is the Microbody targeting signal element.

It belongs to the ATP-dependent AMP-binding enzyme family.

The protein resides in the microsome. It is found in the cytoplasm. It localises to the mitochondrion. The protein localises to the nucleus. It catalyses the reaction acetate + ATP + CoA = acetyl-CoA + AMP + diphosphate. In terms of biological role, catalyzes the production of acetyl-CoA. Provides the acetyl-CoA source for histone acetylation in the nucleus. 'Aerobic' isozyme of acetyl-coenzyme A synthetase, which supports growth on nonfermentable carbon sources such as glycerol and ethanol. May be required for assimilation of ethanol and acetate. The polypeptide is Acetyl-coenzyme A synthetase 1 (ACS1) (Saccharomyces cerevisiae (strain ATCC 204508 / S288c) (Baker's yeast)).